A 378-amino-acid polypeptide reads, in one-letter code: Chaperone protein DnaJ (378 aa).

In terms of domain architecture, J spans 3–67; it reads DYYDLLGVSK…QTRGRYDQFG (65 aa). The CR-type zinc-finger motif lies at 133–215; sequence GQEREIKIPH…CAGQGVRQVR (83 aa). Residues Cys146, Cys149, Cys163, Cys166, Cys189, Cys192, Cys203, and Cys206 each contribute to the Zn(2+) site. CXXCXGXG motif repeat units follow at residues 146–153, 163–170, 189–196, and 203–210; these read CDTCNGTG, CSTCGGVG, CPSCEGTG, and CPACAGQG.

This sequence belongs to the DnaJ family. In terms of assembly, homodimer. Zn(2+) is required as a cofactor.

Its subcellular location is the cytoplasm. In terms of biological role, participates actively in the response to hyperosmotic and heat shock by preventing the aggregation of stress-denatured proteins and by disaggregating proteins, also in an autonomous, DnaK-independent fashion. Unfolded proteins bind initially to DnaJ; upon interaction with the DnaJ-bound protein, DnaK hydrolyzes its bound ATP, resulting in the formation of a stable complex. GrpE releases ADP from DnaK; ATP binding to DnaK triggers the release of the substrate protein, thus completing the reaction cycle. Several rounds of ATP-dependent interactions between DnaJ, DnaK and GrpE are required for fully efficient folding. Also involved, together with DnaK and GrpE, in the DNA replication of plasmids through activation of initiation proteins. This chain is Chaperone protein DnaJ, found in Prochlorococcus marinus (strain MIT 9313).